An 852-amino-acid chain; its full sequence is Nucleolar protein 14 homolog (852 aa).

Residues 1–40 (MVAKGKKASADAVYAKKTTRSANPFDNSTAQSSKRGNPFD) are disordered. A compositionally biased stretch (polar residues) spans 20–35 (RSANPFDNSTAQSSKR). Residues 190–221 (IDEMIVEQKRRKNEIAKEKDEVYDLTEKLDAN) adopt a coiled-coil conformation. Disordered regions lie at residues 288–324 (RRMRADGEEDEEASVAKPKHRSADDLDDGYFLAGEDD) and 338–410 (LGTH…KSAD). The segment covering 344–353 (GKKEAVLKGD) has biased composition (basic and acidic residues). Residues 354-381 (ENEDDDDKEGEEEEEEDSDEESDSEVDN) are compositionally biased toward acidic residues. Residues 774 to 851 (KMSKAKEERA…ELSRAKKKKK (78 aa)) adopt a coiled-coil conformation.

Belongs to the NOP14 family. As to quaternary structure, component of the ribosomal small subunit (SSU) processome.

The protein resides in the nucleus. It localises to the nucleolus. Functionally, involved in nucleolar processing of pre-18S ribosomal RNA. Has a role in the nuclear export of 40S pre-ribosomal subunit to the cytoplasm. The chain is Nucleolar protein 14 homolog (l(3)07882) from Drosophila melanogaster (Fruit fly).